A 413-amino-acid chain; its full sequence is MAPPSVFAQVPQAPPVLVFKLTADFRDDPDPRKVNLGVGAYRTDESQPWVLPVVRKVEQKIANDNSLNHEYLPILGLAEFRSCASRLVLGDNSLAIRENRVGGVQSLGGTGALRIGADFLGRWYNGTDNKNTPIYVSSPTWENHNAVFSAAGFKDIRPYCYWDAEKRGLDLQGFLNDLENAPEFSIFVLHACAHNPTGTDPTPEQWKQIAAVMQRRFLFPFFDSAYQGFASGDLEKDAWAIRYFVSEGFELFCAQSFSKNFGLYNERVGNLTVVGKESDSVLRVLSQMEKIVRITWSNPPAQGARIVAATLSDPELFKEWKGNVKTMADRILTMRSELRARLEALKTPGTWSHITEQIGMFSFTGLNPKQVEYLVNEKHIYLLPSGRINMCGLTTKNLDYVATSIHEAVTKIQ.

L-aspartate is bound by residues Gly-39 and Trp-141. Ser-149 carries the post-translational modification Phosphoserine. Asn-195 serves as a coordination point for L-aspartate. An N6-(pyridoxal phosphate)lysine modification is found at Lys-259. Lys-318 bears the N6-succinyllysine mark. L-aspartate is bound at residue Arg-387.

This sequence belongs to the class-I pyridoxal-phosphate-dependent aminotransferase family. Homodimer. It depends on pyridoxal 5'-phosphate as a cofactor. Expressed in neurons of the retina. Localizes to the inner and outer plexiform layers, the inner and outer nuclear layer and the outer segments of photoreceptors.

The protein localises to the cytoplasm. The catalysed reaction is L-aspartate + 2-oxoglutarate = oxaloacetate + L-glutamate. It carries out the reaction L-cysteine + 2-oxoglutarate = 2-oxo-3-sulfanylpropanoate + L-glutamate. The enzyme catalyses (2S)-2-aminobutanoate + 2-oxoglutarate = 2-oxobutanoate + L-glutamate. It catalyses the reaction 3-sulfino-L-alanine + 2-oxoglutarate = 3-sulfinopyruvate + L-glutamate. Its activity is regulated as follows. Inhibited by calcium ions. In terms of biological role, biosynthesis of L-glutamate from L-aspartate or L-cysteine. Important regulator of levels of glutamate, the major excitatory neurotransmitter of the vertebrate central nervous system. Acts as a scavenger of glutamate in brain neuroprotection. The aspartate aminotransferase activity is involved in hepatic glucose synthesis during development and in adipocyte glyceroneogenesis. Using L-cysteine as substrate, regulates levels of mercaptopyruvate, an important source of hydrogen sulfide. Mercaptopyruvate is converted into H(2)S via the action of 3-mercaptopyruvate sulfurtransferase (3MST). Hydrogen sulfide is an important synaptic modulator and neuroprotectant in the brain. This chain is Aspartate aminotransferase, cytoplasmic, found in Mus musculus (Mouse).